We begin with the raw amino-acid sequence, 137 residues long: NADH dehydrogenase [ubiquinone] 1 beta subcomplex subunit 7 (137 aa).

The N-myristoyl glycine moiety is linked to residue glycine 2. The 43-residue stretch at 56–98 folds into the CHCH domain; sequence RDYCAHYLIRFLKCKRDSFPNFLACKHERHDWDYCEHLDYVKR. The Cx9C motif 1 motif lies at 59-69; it reads CAHYLIRFLKC. 2 cysteine pairs are disulfide-bonded: cysteine 59/cysteine 90 and cysteine 69/cysteine 80. Serine 73 carries the phosphoserine modification. The Cx9C motif 2 signature appears at 80 to 90; that stretch reads CKHERHDWDYC. A disordered region spans residues 110–137; that stretch reads QRKKRREQREADMAKGLGPGEVAPEVAL.

This sequence belongs to the complex I NDUFB7 subunit family. In terms of assembly, complex I is composed of 45 different subunits.

The protein localises to the mitochondrion inner membrane. The protein resides in the mitochondrion intermembrane space. Functionally, accessory subunit of the mitochondrial membrane respiratory chain NADH dehydrogenase (Complex I), that is believed not to be involved in catalysis. Complex I functions in the transfer of electrons from NADH to the respiratory chain. The immediate electron acceptor for the enzyme is believed to be ubiquinone. This Bos taurus (Bovine) protein is NADH dehydrogenase [ubiquinone] 1 beta subcomplex subunit 7 (NDUFB7).